A 576-amino-acid chain; its full sequence is Sulfite reductase [NADPH] hemoprotein beta-component (576 aa).

Residues Cys439, Cys445, Cys485, and Cys489 each contribute to the [4Fe-4S] cluster site. Siroheme is bound at residue Cys489.

This sequence belongs to the nitrite and sulfite reductase 4Fe-4S domain family. In terms of assembly, alpha(8)-beta(8). The alpha component is a flavoprotein, the beta component is a hemoprotein. Siroheme serves as cofactor. It depends on [4Fe-4S] cluster as a cofactor.

It carries out the reaction hydrogen sulfide + 3 NADP(+) + 3 H2O = sulfite + 3 NADPH + 4 H(+). Its pathway is sulfur metabolism; hydrogen sulfide biosynthesis; hydrogen sulfide from sulfite (NADPH route): step 1/1. Its function is as follows. Component of the sulfite reductase complex that catalyzes the 6-electron reduction of sulfite to sulfide. This is one of several activities required for the biosynthesis of L-cysteine from sulfate. This chain is Sulfite reductase [NADPH] hemoprotein beta-component, found in Aliivibrio fischeri (strain ATCC 700601 / ES114) (Vibrio fischeri).